Consider the following 247-residue polypeptide: Segregation and condensation protein A (247 aa).

The protein belongs to the ScpA family. In terms of assembly, component of a cohesin-like complex composed of ScpA, ScpB and the Smc homodimer, in which ScpA and ScpB bind to the head domain of Smc. The presence of the three proteins is required for the association of the complex with DNA.

The protein localises to the cytoplasm. Functionally, participates in chromosomal partition during cell division. May act via the formation of a condensin-like complex containing Smc and ScpB that pull DNA away from mid-cell into both cell halves. This chain is Segregation and condensation protein A, found in Bacillus cereus (strain G9842).